The following is a 610-amino-acid chain: Elongation factor 4 (610 aa).

One can recognise a tr-type G domain in the interval 15-197; it reads KSIRNFSIIA…RIINDIPYPK (183 aa). Residues 27–32 and 144–147 contribute to the GTP site; these read DHGKST and NKID.

This sequence belongs to the TRAFAC class translation factor GTPase superfamily. Classic translation factor GTPase family. LepA subfamily.

Its subcellular location is the cell membrane. It carries out the reaction GTP + H2O = GDP + phosphate + H(+). Required for accurate and efficient protein synthesis under certain stress conditions. May act as a fidelity factor of the translation reaction, by catalyzing a one-codon backward translocation of tRNAs on improperly translocated ribosomes. Back-translocation proceeds from a post-translocation (POST) complex to a pre-translocation (PRE) complex, thus giving elongation factor G a second chance to translocate the tRNAs correctly. Binds to ribosomes in a GTP-dependent manner. This chain is Elongation factor 4, found in Buchnera aphidicola subsp. Acyrthosiphon pisum (strain APS) (Acyrthosiphon pisum symbiotic bacterium).